Reading from the N-terminus, the 1106-residue chain is Protein transport protein Sec31A (1106 aa).

7 WD repeats span residues K4–E47, R68–K111, K120–T160, Q166–K206, D209–R254, N258–E298, and T301–R342. The segment at P161–K471 is interaction with SEC13. Residues S397–S430 form a WD 8; interaction with SEC13 repeat. Phosphoserine is present on residues S527 and S532. K647 is covalently cross-linked (Glycyl lysine isopeptide (Lys-Gly) (interchain with G-Cter in ubiquitin)). S799 carries the post-translational modification Phosphoserine. Residues P800–P999 form an interaction with PDCD6 region. Positions G842 to N848 match the ALG-2-binding site motif-2 (ABS-2) motif. A disordered region spans residues T859–N980. Residues P917–P939 show a composition bias toward polar residues. T1047 is modified (phosphothreonine). At S1049 the chain carries Phosphoserine. A Glycyl lysine isopeptide (Lys-Gly) (interchain with G-Cter in ubiquitin) cross-link involves residue K1103.

It belongs to the WD repeat SEC31 family. In terms of assembly, COPII is composed of at least 5 proteins: the SEC23/24 complex, the SEC13/31 complex and SAR1. SEC13 and SEC31 make a 2:2 tetramer that forms the edge element of the COPII outer coat. The tetramer self-assembles in multiple copies to form the complete polyhedral cage. Interacts (via WD 8) with SEC13. Interacts with PDCD6; interaction takes place in response to cytosolic calcium increase and leads to bridge together the BCR(KLHL12) complex and SEC31A, leading to monoubiquitination. Interacts with KLHL12. In terms of processing, monoubiquitinated by the BCR(KLHL12) E3 ubiquitin ligase complex, leading to regulate the size of COPII coats.

Its subcellular location is the cytoplasm. The protein localises to the cytoplasmic vesicle. It localises to the COPII-coated vesicle membrane. It is found in the endoplasmic reticulum membrane. Functionally, component of the coat protein complex II (COPII) which promotes the formation of transport vesicles from the endoplasmic reticulum (ER). The coat has two main functions, the physical deformation of the endoplasmic reticulum membrane into vesicles and the selection of cargo molecules. This is Protein transport protein Sec31A (SEC31A) from Pongo abelii (Sumatran orangutan).